Consider the following 332-residue polypeptide: 2-hydroxyacid dehydrogenase homolog 2 (332 aa).

NAD(+) contacts are provided by residues 154–155 (KI), 233–235 (TSR), and D259. Residue R235 is part of the active site. E264 is an active-site residue. Catalysis depends on H296, which acts as the Proton donor. 296–299 (HQAF) lines the NAD(+) pocket.

It belongs to the D-isomer specific 2-hydroxyacid dehydrogenase family.

Its subcellular location is the cytoplasm. The protein resides in the nucleus. The sequence is that of 2-hydroxyacid dehydrogenase homolog 2 from Schizosaccharomyces pombe (strain 972 / ATCC 24843) (Fission yeast).